Here is a 456-residue protein sequence, read N- to C-terminus: Bifunctional protein GlmU (456 aa).

Positions 1–229 (MLNSAMSVVI…ISETDGVNNR (229 aa)) are pyrophosphorylase. UDP-N-acetyl-alpha-D-glucosamine is bound by residues 11-14 (LAAG), K25, Q76, 81-82 (GT), 103-105 (YGD), G140, E154, N169, and N227. D105 contributes to the Mg(2+) binding site. N227 serves as a coordination point for Mg(2+). Positions 230–250 (LQLSRLERIYQAEQAEKLLLS) are linker. An N-acetyltransferase region spans residues 251–456 (GVMLRDPARF…QGWQRPVKKK (206 aa)). UDP-N-acetyl-alpha-D-glucosamine contacts are provided by R333 and K351. The active-site Proton acceptor is the H363. UDP-N-acetyl-alpha-D-glucosamine contacts are provided by Y366 and N377. Acetyl-CoA contacts are provided by residues A380, 386–387 (NY), S405, A423, and R440.

The protein in the N-terminal section; belongs to the N-acetylglucosamine-1-phosphate uridyltransferase family. This sequence in the C-terminal section; belongs to the transferase hexapeptide repeat family. As to quaternary structure, homotrimer. It depends on Mg(2+) as a cofactor.

It is found in the cytoplasm. The catalysed reaction is alpha-D-glucosamine 1-phosphate + acetyl-CoA = N-acetyl-alpha-D-glucosamine 1-phosphate + CoA + H(+). It catalyses the reaction N-acetyl-alpha-D-glucosamine 1-phosphate + UTP + H(+) = UDP-N-acetyl-alpha-D-glucosamine + diphosphate. It participates in nucleotide-sugar biosynthesis; UDP-N-acetyl-alpha-D-glucosamine biosynthesis; N-acetyl-alpha-D-glucosamine 1-phosphate from alpha-D-glucosamine 6-phosphate (route II): step 2/2. The protein operates within nucleotide-sugar biosynthesis; UDP-N-acetyl-alpha-D-glucosamine biosynthesis; UDP-N-acetyl-alpha-D-glucosamine from N-acetyl-alpha-D-glucosamine 1-phosphate: step 1/1. Its pathway is bacterial outer membrane biogenesis; LPS lipid A biosynthesis. In terms of biological role, catalyzes the last two sequential reactions in the de novo biosynthetic pathway for UDP-N-acetylglucosamine (UDP-GlcNAc). The C-terminal domain catalyzes the transfer of acetyl group from acetyl coenzyme A to glucosamine-1-phosphate (GlcN-1-P) to produce N-acetylglucosamine-1-phosphate (GlcNAc-1-P), which is converted into UDP-GlcNAc by the transfer of uridine 5-monophosphate (from uridine 5-triphosphate), a reaction catalyzed by the N-terminal domain. The chain is Bifunctional protein GlmU from Salmonella paratyphi A (strain ATCC 9150 / SARB42).